We begin with the raw amino-acid sequence, 337 residues long: Phenylalanine--tRNA ligase alpha subunit (337 aa).

A Mg(2+)-binding site is contributed by E252.

The protein belongs to the class-II aminoacyl-tRNA synthetase family. Phe-tRNA synthetase alpha subunit type 1 subfamily. As to quaternary structure, tetramer of two alpha and two beta subunits. The cofactor is Mg(2+).

Its subcellular location is the cytoplasm. The enzyme catalyses tRNA(Phe) + L-phenylalanine + ATP = L-phenylalanyl-tRNA(Phe) + AMP + diphosphate + H(+). This Francisella philomiragia subsp. philomiragia (strain ATCC 25017 / CCUG 19701 / FSC 153 / O#319-036) protein is Phenylalanine--tRNA ligase alpha subunit.